A 346-amino-acid polypeptide reads, in one-letter code: MTEQRIIASSSTREDDAADASIRPKRLADYLGQQPVREQMEIYIQAAKARGEAMDHVLIFGPPGLGKTTLSHVIANELGVSLRVTSGPVIEKAGDLAALLTNLQPHDVLFIDEIHRLSPVVEEVLYPAMEDFQIDIMIGDGPAARSIKIDLPPFTLIGATTRAGLLTAPLRDRFGIVQRLEFYSPQELTRIVIRSAAILGIDCTAEGAAEIARRARGTPRIANRLLRRVRDYAQVKAAGHIDLPVAQAAMQMLKVDPEGFDELDRRMLRTIVEHFDGGPVGVESLAASLSEERGTLEDVIEPYLIQQGFLIRTARGRMVTPKAYLHLGLKPPRERAPGIGEPGDLF.

The interval 1–183 (MTEQRIIASS…FGIVQRLEFY (183 aa)) is large ATPase domain (RuvB-L). ATP-binding positions include Ile-22, Arg-23, Gly-64, Lys-67, Thr-68, Thr-69, 130–132 (EDF), Arg-173, Tyr-183, and Arg-220. Thr-68 provides a ligand contact to Mg(2+). Residues 184-254 (SPQELTRIVI…VAQAAMQMLK (71 aa)) form a small ATPAse domain (RuvB-S) region. The segment at 257–346 (PEGFDELDRR…PGIGEPGDLF (90 aa)) is head domain (RuvB-H). DNA is bound by residues Arg-293, Arg-312, and Arg-317.

This sequence belongs to the RuvB family. Homohexamer. Forms an RuvA(8)-RuvB(12)-Holliday junction (HJ) complex. HJ DNA is sandwiched between 2 RuvA tetramers; dsDNA enters through RuvA and exits via RuvB. An RuvB hexamer assembles on each DNA strand where it exits the tetramer. Each RuvB hexamer is contacted by two RuvA subunits (via domain III) on 2 adjacent RuvB subunits; this complex drives branch migration. In the full resolvosome a probable DNA-RuvA(4)-RuvB(12)-RuvC(2) complex forms which resolves the HJ.

Its subcellular location is the cytoplasm. The enzyme catalyses ATP + H2O = ADP + phosphate + H(+). The RuvA-RuvB-RuvC complex processes Holliday junction (HJ) DNA during genetic recombination and DNA repair, while the RuvA-RuvB complex plays an important role in the rescue of blocked DNA replication forks via replication fork reversal (RFR). RuvA specifically binds to HJ cruciform DNA, conferring on it an open structure. The RuvB hexamer acts as an ATP-dependent pump, pulling dsDNA into and through the RuvAB complex. RuvB forms 2 homohexamers on either side of HJ DNA bound by 1 or 2 RuvA tetramers; 4 subunits per hexamer contact DNA at a time. Coordinated motions by a converter formed by DNA-disengaged RuvB subunits stimulates ATP hydrolysis and nucleotide exchange. Immobilization of the converter enables RuvB to convert the ATP-contained energy into a lever motion, pulling 2 nucleotides of DNA out of the RuvA tetramer per ATP hydrolyzed, thus driving DNA branch migration. The RuvB motors rotate together with the DNA substrate, which together with the progressing nucleotide cycle form the mechanistic basis for DNA recombination by continuous HJ branch migration. Branch migration allows RuvC to scan DNA until it finds its consensus sequence, where it cleaves and resolves cruciform DNA. This chain is Holliday junction branch migration complex subunit RuvB, found in Xanthomonas axonopodis pv. citri (strain 306).